The primary structure comprises 237 residues: Uridylate kinase (237 aa).

12–15 (KLSG) is a binding site for ATP. The tract at residues 20-25 (GDEGFG) is involved in allosteric activation by GTP. Residue glycine 54 coordinates UMP. The ATP site is built by glycine 55 and arginine 59. Residues aspartate 74 and 135-142 (TGSPFFTT) contribute to the UMP site. Positions 162, 168, and 171 each coordinate ATP.

Belongs to the UMP kinase family. Homohexamer.

Its subcellular location is the cytoplasm. It catalyses the reaction UMP + ATP = UDP + ADP. It participates in pyrimidine metabolism; CTP biosynthesis via de novo pathway; UDP from UMP (UMPK route): step 1/1. Its activity is regulated as follows. Allosterically activated by GTP. Inhibited by UTP. In terms of biological role, catalyzes the reversible phosphorylation of UMP to UDP. The polypeptide is Uridylate kinase (Mannheimia succiniciproducens (strain KCTC 0769BP / MBEL55E)).